The following is a 200-amino-acid chain: Cytochrome c biogenesis ATP-binding export protein CcmA (200 aa).

An ABC transporter domain is found at M1–A199. G35–T42 is a binding site for ATP.

This sequence belongs to the ABC transporter superfamily. CcmA exporter (TC 3.A.1.107) family. In terms of assembly, the complex is composed of two ATP-binding proteins (CcmA) and two transmembrane proteins (CcmB).

Its subcellular location is the cell inner membrane. It catalyses the reaction heme b(in) + ATP + H2O = heme b(out) + ADP + phosphate + H(+). Part of the ABC transporter complex CcmAB involved in the biogenesis of c-type cytochromes; once thought to export heme, this seems not to be the case, but its exact role is uncertain. Responsible for energy coupling to the transport system. The polypeptide is Cytochrome c biogenesis ATP-binding export protein CcmA (Rhodopseudomonas palustris (strain BisB18)).